Consider the following 257-residue polypeptide: Phosphate import ATP-binding protein PstB (257 aa).

The region spanning 5-246 (LEIKDLTAFY…EVIFTSPKNE (242 aa)) is the ABC transporter domain. An ATP-binding site is contributed by 37-44 (GPSGCGKS).

This sequence belongs to the ABC transporter superfamily. Phosphate importer (TC 3.A.1.7) family. The complex is composed of two ATP-binding proteins (PstB), two transmembrane proteins (PstC and PstA) and a solute-binding protein (PstS).

It is found in the cell membrane. It carries out the reaction phosphate(out) + ATP + H2O = ADP + 2 phosphate(in) + H(+). Part of the ABC transporter complex PstSACB involved in phosphate import. Responsible for energy coupling to the transport system. This Tropheryma whipplei (strain TW08/27) (Whipple's bacillus) protein is Phosphate import ATP-binding protein PstB.